The chain runs to 660 residues: Baseplate wedge protein gp6 (660 aa).

It belongs to the T4likevirus baseplate wedge protein gp6 family. In terms of assembly, homodimer; each gp6 molecule in the ring interacts with its two neighbors, forming an N-terminal dimer with one and a C-terminal dimer with the other. Heterotrimer with gp7; gp6 is part of a (gp6)2-gp7 heterotrimeric molecule. The (gp6)2-gp7 heterotrimeric molecule further interacts with gp25 and gp53; the gp25-(gp6)2-gp7 module is involved in sheath contraction. Part of the baseplate macromolecular complex which consists of gp5, gp5.4, gp27 (central spike complex); gp6, gp25, gp53 (inner baseplate); gp7, gp8 (intermediate baseplate); gp9, gp10, gp11, gp12 (peripheral); gp48 and gp54 (proximal region of the tail tube).

The protein resides in the virion. Baseplate protein that is located next to the tail tube (inner baseplate). Involved in the tail assembly. The gp25-(gp6)2-gp7 module is involved in sheath contraction. The chain is Baseplate wedge protein gp6 (6) from Escherichia coli (Bacteriophage T4).